Consider the following 240-residue polypeptide: 14-3-3 protein 3 (240 aa).

This sequence belongs to the 14-3-3 family. Interacts with coactosin. Interacts with ACTO/actophorin.

It localises to the cytoplasm. The protein resides in the cell projection. It is found in the phagocytic cup. Adapter protein which is required for phagocytosis and motility, probably by regulating actin cytoskeleton dynamics. During phagocytosis, plays a role in the initiation and/or formation of the phagocytic cup and is involved in the recruitment of the actin binding protein coactosin to the phagocytic cup. This is 14-3-3 protein 3 from Entamoeba histolytica (strain ATCC 30459 / HM-1:IMSS / ABRM).